We begin with the raw amino-acid sequence, 384 residues long: MFLHNTKFCRLASGLAGGVRNLSGQKPKTAILMLNMGGPTHTDQVHDYLLRIMTDRDMIQLPVQSRLGPWIAQRRTPEVQKKYKEIGGGSPILKWTELQGQLMCEQLDRISPETAPHKHYVGFRYVNPLTENTLAEIEKDKPERVVLFSQYPQYSCATSGSSFNSIFTHYRSNNLPSDIKWSIIDRWGTHPLLIKTFAQRIRDELAKFVETKRNDVVILFTAHSLPLKAVNRGDAYPSEIGASVHMVMQELGQTNPYSLAWQSKVGPLPWLAPATDDAIKGYVKQGLKNFILVPIAFVNEHIETLHELDIEYCDELAKEVGVEEIRRAATPNDHPLFIDALTNVVADHLKSQQAVNPKFLMRCPMCSNPKCRESKSWYRQLCSN.

Residue C156 coordinates [2Fe-2S] cluster. Catalysis depends on residues H190 and N343. [2Fe-2S] cluster-binding residues include C363, C366, and C371.

The protein belongs to the ferrochelatase family. As to quaternary structure, homodimer. Homotetramer. The cofactor is [2Fe-2S] cluster.

It is found in the mitochondrion inner membrane. The catalysed reaction is heme b + 2 H(+) = protoporphyrin IX + Fe(2+). The protein operates within porphyrin-containing compound metabolism; protoheme biosynthesis; protoheme from protoporphyrin-IX: step 1/1. Catalyzes the ferrous insertion into protoporphyrin IX. Terminal enzyme in heme biosynthesis. Contains four conserved cysteines that function as cluster ligands and play a crucial role in maintaining protein structure. The chain is Ferrochelatase, mitochondrial from Drosophila melanogaster (Fruit fly).